Consider the following 387-residue polypeptide: MKNISILGATGSIGSQTLDVIRKSNGELKLIGVTANTSVKKVIEIIEEFKPSYVGMMDAVSTHEIKKYCEEHNKKIKVLEGIEGLDKIASLDEIDMVVTSVVGMIGLEPTMKAIEAKKDIALANKETLVVAGEIVMKAAKENNVKIFPVDSEHSAIFQCLRGNDINTLRKIILTASGGPFRGRTLESLEDIKVEDALKHPKWNMGRKISIDSATLMNKGLEVIEAHWLFNCDYDNIQVVVHPQSIVHSMVEYNDGSIVAQLGAQDMRLPIQYALLYENREKRIADTIDFYEISQLTFEKPDIDTFKALNLAFKAGKAGRLMPTILNGANEAAVELFLDRKIKFLQIADIIERCMEVFKTQANKELTLENIIELDKEVKEYVIKNAVL.

NADPH-binding residues include threonine 10, glycine 11, serine 12, isoleucine 13, and asparagine 124. Lysine 125 is a binding site for 1-deoxy-D-xylulose 5-phosphate. Glutamate 126 is a binding site for NADPH. Aspartate 150 contributes to the Mn(2+) binding site. 1-deoxy-D-xylulose 5-phosphate is bound by residues serine 151, glutamate 152, serine 176, and histidine 199. Position 152 (glutamate 152) interacts with Mn(2+). Glycine 205 is a binding site for NADPH. 1-deoxy-D-xylulose 5-phosphate contacts are provided by serine 212, asparagine 217, lysine 218, and glutamate 221. Residue glutamate 221 coordinates Mn(2+).

It belongs to the DXR family. The cofactor is Mg(2+). Requires Mn(2+) as cofactor.

It catalyses the reaction 2-C-methyl-D-erythritol 4-phosphate + NADP(+) = 1-deoxy-D-xylulose 5-phosphate + NADPH + H(+). Its pathway is isoprenoid biosynthesis; isopentenyl diphosphate biosynthesis via DXP pathway; isopentenyl diphosphate from 1-deoxy-D-xylulose 5-phosphate: step 1/6. In terms of biological role, catalyzes the NADPH-dependent rearrangement and reduction of 1-deoxy-D-xylulose-5-phosphate (DXP) to 2-C-methyl-D-erythritol 4-phosphate (MEP). This Clostridium beijerinckii (strain ATCC 51743 / NCIMB 8052) (Clostridium acetobutylicum) protein is 1-deoxy-D-xylulose 5-phosphate reductoisomerase.